Consider the following 204-residue polypeptide: Guanylate kinase (204 aa).

The 179-residue stretch at 6 to 184 folds into the Guanylate kinase-like domain; sequence GLLIVLSGPA…AVDRIKAIVT (179 aa). 13-20 serves as a coordination point for ATP; that stretch reads GPAGVGKG.

It belongs to the guanylate kinase family.

It is found in the cytoplasm. It carries out the reaction GMP + ATP = GDP + ADP. Functionally, essential for recycling GMP and indirectly, cGMP. In Halalkalibacterium halodurans (strain ATCC BAA-125 / DSM 18197 / FERM 7344 / JCM 9153 / C-125) (Bacillus halodurans), this protein is Guanylate kinase (gmk).